We begin with the raw amino-acid sequence, 1233 residues long: Anion exchange protein 3 (1233 aa).

Residues 1 to 11 (MANGVIPPPGG) are compositionally biased toward pro residues. Disordered stretches follow at residues 1–320 (MANG…RRPH) and 431–500 (DDKD…DGHR). Topologically, residues 1–709 (MANGVIPPPG…DLRDALHSQC (709 aa)) are cytoplasmic. Residues 58 to 73 (DPEKPSRSFSERDFAF) are compositionally biased toward basic and acidic residues. Basic residues-rich tracts occupy residues 74–97 (HRHISHHTHHPLSARLPPPHKLRR) and 104–113 (RHTRRKRKKE). Over residues 137 to 153 (GEEEEEEEEEGESETEA) the composition is skewed to acidic residues. Phosphoserine occurs at positions 168, 171, 176, and 199. Residues 201 to 216 (QRSVSSSSPRARAPRV) are compositionally biased toward low complexity. The segment covering 268-290 (DDMKSHRLEDNPGVRRHLVKEPS) has biased composition (basic and acidic residues). Omega-N-methylarginine is present on R296. The span at 437–450 (SFPRNPSSSSVNSV) shows a compositional bias: low complexity. Positions 482–500 (HDPDAKERPLHMPGGDGHR) are enriched in basic and acidic residues. A run of 4 helical transmembrane segments spans residues 710 to 732 (VAAVLFIYFAALSPAITFGGLLG), 738 to 775 (LMGVSELIVSTAVLGVLFSLLGAQPLLVVGFSGPLLVF), 795 to 817 (VWVGLWLVVFVLALVGAEGTFLV), and 827 to 848 (IFAFLISLIFIYETFHKLYKVF). The tract at residues 710–1233 (VAAVLFIYFA…DEYNELHMPV (524 aa)) is membrane (anion exchange). N874 carries an N-linked (GlcNAc...) asparagine glycan. The chain crosses the membrane as a helical span at residues 894–911 (ALLSLILMLGTFLIAFFL). Topologically, residues 912 to 926 (RKFRNSRFLGGKARR) are cytoplasmic. The next 5 membrane-spanning stretches (helical) occupy residues 927-947 (IIGDFGIPISILLMVLVDYSI), 981-1003 (PFPPWMMVAAAVPALLVLILIFM), 1029-1050 (LLLIGSLGGLCGLFGLPWLTAA), 1084-1129 (VTGV…IQLS), and 1156-1192 (MHLFTCIQLACIALLWVVKSTAASLAFPFLLLLTVPL). The S-palmitoyl cysteine moiety is linked to residue C1166.

It belongs to the anion exchanger (TC 2.A.31) family.

It is found in the cell membrane. The catalysed reaction is hydrogencarbonate(in) + chloride(out) = hydrogencarbonate(out) + chloride(in). Functionally, sodium-independent anion exchanger which mediates the electroneutral exchange of chloride for bicarbonate ions across the cell membrane. May be involved in the regulation of intracellular pH, and the modulation of cardiac action potential. The chain is Anion exchange protein 3 (SLC4A3) from Oryctolagus cuniculus (Rabbit).